We begin with the raw amino-acid sequence, 528 residues long: Lysine--tRNA ligase (528 aa).

The 'HIGH' region motif lies at 36-44 (PSGTVHIGN). Positions 287 to 291 (KMSSS) match the 'KMSKS' region motif.

It belongs to the class-I aminoacyl-tRNA synthetase family.

It localises to the cytoplasm. The catalysed reaction is tRNA(Lys) + L-lysine + ATP = L-lysyl-tRNA(Lys) + AMP + diphosphate. This chain is Lysine--tRNA ligase (lysS), found in Treponema pallidum (strain Nichols).